The sequence spans 361 residues: (S)-coclaurine N-methyltransferase (361 aa).

Positions 101, 139, 163, 167, 189, 190, and 205 each coordinate S-adenosyl-L-methionine. C336 is an active-site residue.

Belongs to the CFA/CMAS family. As to quaternary structure, homodimer. As to expression, highly expressed in rhizomes. Detected in roots, petioles, flower buds and leaves. Expressed between the developing stele and ground tissues near the root apical meristem, in the immature endodermis, the pericycle and the spokes of developing xylem in the apical region of the root and in the protoderm of leaf primordia in rhizomes.

It localises to the cytoplasm. It catalyses the reaction norreticuline + S-adenosyl-L-methionine = reticuline + S-adenosyl-L-homocysteine + H(+). The enzyme catalyses (S)-coclaurine + S-adenosyl-L-methionine = (S)-N-methylcoclaurine + S-adenosyl-L-homocysteine + H(+). The catalysed reaction is heliamine + S-adenosyl-L-methionine = N-methylheliamine + S-adenosyl-L-homocysteine + H(+). It participates in alkaloid biosynthesis. Involved in the biosynthesis of protoberberine alkaloids. N-methyltransferase with a substrate preference for (R,S)-norreticuline but also active with dimethoxytetrahydroisoquinoline. The polypeptide is (S)-coclaurine N-methyltransferase (Thalictrum flavum subsp. glaucum (Yellow meadow rue)).